A 694-amino-acid chain; its full sequence is Polyphosphate kinase (694 aa).

N45 is an ATP binding site. Residues R367 and R397 each contribute to the Mg(2+) site. H427 (phosphohistidine intermediate) is an active-site residue. ATP is bound by residues Y460, R553, and H580.

It belongs to the polyphosphate kinase 1 (PPK1) family. It depends on Mg(2+) as a cofactor. In terms of processing, an intermediate of this reaction is the autophosphorylated ppk in which a phosphate is covalently linked to a histidine residue through a N-P bond.

The enzyme catalyses [phosphate](n) + ATP = [phosphate](n+1) + ADP. Its function is as follows. Catalyzes the reversible transfer of the terminal phosphate of ATP to form a long-chain polyphosphate (polyP). The sequence is that of Polyphosphate kinase from Campylobacter coli.